The sequence spans 459 residues: uncharacterized protein (459 aa).

One can recognise a B12-binding domain in the interval 13–145 (TESAIKRVVG…DALSKGRELK (133 aa)). One can recognise a Radical SAM core domain in the interval 188 to 402 (ADGVPFGVVM…MNWRKYTTID (215 aa)). The [4Fe-4S] cluster site is built by cysteine 202, cysteine 206, and cysteine 209.

It belongs to the methyltransferase superfamily. [4Fe-4S] cluster is required as a cofactor.

This is an uncharacterized protein from Pyrococcus horikoshii (strain ATCC 700860 / DSM 12428 / JCM 9974 / NBRC 100139 / OT-3).